We begin with the raw amino-acid sequence, 328 residues long: Anthranilate phosphoribosyltransferase (328 aa).

5-phospho-alpha-D-ribose 1-diphosphate-binding positions include glycine 79, 82 to 83, threonine 87, 89 to 92, 107 to 115, and serine 119; these read GD, NIST, and KHGNYAVSS. Residue glycine 79 participates in anthranilate binding. Serine 91 contacts Mg(2+). An anthranilate-binding site is contributed by asparagine 110. Arginine 165 serves as a coordination point for anthranilate. Mg(2+) is bound by residues aspartate 223 and glutamate 224.

This sequence belongs to the anthranilate phosphoribosyltransferase family. As to quaternary structure, homodimer. Mg(2+) serves as cofactor.

The enzyme catalyses N-(5-phospho-beta-D-ribosyl)anthranilate + diphosphate = 5-phospho-alpha-D-ribose 1-diphosphate + anthranilate. It functions in the pathway amino-acid biosynthesis; L-tryptophan biosynthesis; L-tryptophan from chorismate: step 2/5. In terms of biological role, catalyzes the transfer of the phosphoribosyl group of 5-phosphorylribose-1-pyrophosphate (PRPP) to anthranilate to yield N-(5'-phosphoribosyl)-anthranilate (PRA). The polypeptide is Anthranilate phosphoribosyltransferase (Cytophaga hutchinsonii (strain ATCC 33406 / DSM 1761 / CIP 103989 / NBRC 15051 / NCIMB 9469 / D465)).